Consider the following 275-residue polypeptide: Formamidopyrimidine-DNA glycosylase (275 aa).

P2 serves as the catalytic Schiff-base intermediate with DNA. The active-site Proton donor is E3. The Proton donor; for beta-elimination activity role is filled by K58. DNA contacts are provided by H91 and R110. An FPG-type zinc finger spans residues 238 to 272 (QVYGQTGKSCPRCGQAIVKLKVGGRGTHICPKCQK). Residue R262 is the Proton donor; for delta-elimination activity of the active site.

The protein belongs to the FPG family. In terms of assembly, monomer. Zn(2+) serves as cofactor.

The enzyme catalyses Hydrolysis of DNA containing ring-opened 7-methylguanine residues, releasing 2,6-diamino-4-hydroxy-5-(N-methyl)formamidopyrimidine.. It catalyses the reaction 2'-deoxyribonucleotide-(2'-deoxyribose 5'-phosphate)-2'-deoxyribonucleotide-DNA = a 3'-end 2'-deoxyribonucleotide-(2,3-dehydro-2,3-deoxyribose 5'-phosphate)-DNA + a 5'-end 5'-phospho-2'-deoxyribonucleoside-DNA + H(+). In terms of biological role, involved in base excision repair of DNA damaged by oxidation or by mutagenic agents. Acts as a DNA glycosylase that recognizes and removes damaged bases. Has a preference for oxidized purines, such as 7,8-dihydro-8-oxoguanine (8-oxoG). Has AP (apurinic/apyrimidinic) lyase activity and introduces nicks in the DNA strand. Cleaves the DNA backbone by beta-delta elimination to generate a single-strand break at the site of the removed base with both 3'- and 5'-phosphates. The chain is Formamidopyrimidine-DNA glycosylase from Streptococcus pyogenes serotype M3 (strain ATCC BAA-595 / MGAS315).